A 196-amino-acid polypeptide reads, in one-letter code: Small ribosomal subunit protein uS4m (196 aa).

An S4 RNA-binding domain is found at 88–154; it reads KRLDVILVRL…FKSNIRKNFQ (67 aa).

The protein belongs to the universal ribosomal protein uS4 family.

The protein resides in the mitochondrion. This Marchantia polymorpha (Common liverwort) protein is Small ribosomal subunit protein uS4m (RPS4).